Here is a 181-residue protein sequence, read N- to C-terminus: Large ribosomal subunit protein uL5c (181 aa).

Belongs to the universal ribosomal protein uL5 family. As to quaternary structure, part of the 50S ribosomal subunit; contacts the 5S rRNA.

It localises to the plastid. Binds 5S rRNA, forms part of the central protuberance of the 50S subunit. In Helicosporidium sp. subsp. Simulium jonesii (Green alga), this protein is Large ribosomal subunit protein uL5c (rpl5).